The following is a 219-amino-acid chain: Inner membrane protein YghB (219 aa).

The Cytoplasmic segment spans residues Met1 to Ala17. A helical membrane pass occupies residues Ala18–Leu38. The Periplasmic portion of the chain corresponds to Glu39 to Asp67. Residues Phe68–Ile88 traverse the membrane as a helical segment. Residues Gln89 to Ser160 are Cytoplasmic-facing. A helical membrane pass occupies residues Gly161 to Val181. Residues Lys182–Phe191 lie on the Periplasmic side of the membrane. Residues Leu192–Ile212 traverse the membrane as a helical segment. The Cytoplasmic segment spans residues Lys213 to Ala219.

This sequence belongs to the DedA family.

The protein localises to the cell inner membrane. The protein is Inner membrane protein YghB (yghB) of Escherichia coli O6:H1 (strain CFT073 / ATCC 700928 / UPEC).